A 443-amino-acid polypeptide reads, in one-letter code: Chromosomal replication initiator protein DnaA (443 aa).

Residues M1–F80 are domain I, interacts with DnaA modulators. A domain II region spans residues F80–P104. A disordered region spans residues S83 to L105. Over residues D85–A97 the composition is skewed to basic and acidic residues. The interval L105–A321 is domain III, AAA+ region. Positions 149, 151, 152, and 153 each coordinate ATP. The segment at N322–A443 is domain IV, binds dsDNA.

This sequence belongs to the DnaA family. In terms of assembly, oligomerizes as a right-handed, spiral filament on DNA at oriC.

The protein localises to the cytoplasm. In terms of biological role, plays an essential role in the initiation and regulation of chromosomal replication. ATP-DnaA binds to the origin of replication (oriC) to initiate formation of the DNA replication initiation complex once per cell cycle. Binds the DnaA box (a 9 base pair repeat at the origin) and separates the double-stranded (ds)DNA. Forms a right-handed helical filament on oriC DNA; dsDNA binds to the exterior of the filament while single-stranded (ss)DNA is stabiized in the filament's interior. The ATP-DnaA-oriC complex binds and stabilizes one strand of the AT-rich DNA unwinding element (DUE), permitting loading of DNA polymerase. After initiation quickly degrades to an ADP-DnaA complex that is not apt for DNA replication. Binds acidic phospholipids. The polypeptide is Chromosomal replication initiator protein DnaA (Heliobacterium modesticaldum (strain ATCC 51547 / Ice1)).